Here is a 170-residue protein sequence, read N- to C-terminus: Transcription factor E (170 aa).

An HTH TFE/IIEalpha-type domain is found at 1 to 93; it reads MKDAYLYVVE…AWYVDDEIIR (93 aa).

It belongs to the TFE family. As to quaternary structure, monomer. Interaction with RNA polymerase subunits RpoF and RpoE is necessary for Tfe stimulatory transcription activity. Able to interact with Tbp and RNA polymerase in the absence of DNA promoter. Interacts both with the preinitiation and elongation complexes.

Transcription factor that plays a role in the activation of archaeal genes transcribed by RNA polymerase. Facilitates transcription initiation by enhancing TATA-box recognition by TATA-box-binding protein (Tbp), and transcription factor B (Tfb) and RNA polymerase recruitment. Not absolutely required for transcription in vitro, but particularly important in cases where Tbp or Tfb function is not optimal. It dynamically alters the nucleic acid-binding properties of RNA polymerases by stabilizing the initiation complex and destabilizing elongation complexes. Seems to translocate with the RNA polymerase following initiation and acts by binding to the non template strand of the transcription bubble in elongation complexes. The chain is Transcription factor E from Pyrobaculum arsenaticum (strain DSM 13514 / JCM 11321 / PZ6).